The sequence spans 308 residues: Ribonuclease Z (308 aa).

Positions 60, 62, 64, 65, 140, 209, and 269 each coordinate Zn(2+). Asp-64 (proton acceptor) is an active-site residue.

The protein belongs to the RNase Z family. In terms of assembly, homodimer. Zn(2+) serves as cofactor.

It catalyses the reaction Endonucleolytic cleavage of RNA, removing extra 3' nucleotides from tRNA precursor, generating 3' termini of tRNAs. A 3'-hydroxy group is left at the tRNA terminus and a 5'-phosphoryl group is left at the trailer molecule.. Its function is as follows. Zinc phosphodiesterase, which displays some tRNA 3'-processing endonuclease activity. Probably involved in tRNA maturation, by removing a 3'-trailer from precursor tRNA. This is Ribonuclease Z from Methanococcus maripaludis (strain DSM 14266 / JCM 13030 / NBRC 101832 / S2 / LL).